We begin with the raw amino-acid sequence, 358 residues long: Magnesium-protoporphyrin IX monomethyl ester [oxidative] cyclase 1 (358 aa).

The protein belongs to the AcsF family. It depends on Fe cation as a cofactor.

The catalysed reaction is Mg-protoporphyrin IX 13-monomethyl ester + 3 NADPH + 3 O2 + 2 H(+) = 3,8-divinyl protochlorophyllide a + 3 NADP(+) + 5 H2O. It participates in porphyrin-containing compound metabolism; chlorophyll biosynthesis (light-independent). In terms of biological role, catalyzes the formation of the isocyclic ring in chlorophyll biosynthesis. Mediates the cyclase reaction, which results in the formation of divinylprotochlorophyllide (Pchlide) characteristic of all chlorophylls from magnesium-protoporphyrin IX 13-monomethyl ester (MgPMME). The chain is Magnesium-protoporphyrin IX monomethyl ester [oxidative] cyclase 1 from Synechocystis sp. (strain ATCC 27184 / PCC 6803 / Kazusa).